The sequence spans 584 residues: Aspartate--tRNA(Asp/Asn) ligase (584 aa).

L-aspartate is bound at residue E173. The aspartate stretch occupies residues 197 to 200 (QLFK). R219 contacts L-aspartate. Residues 219-221 (RDE) and Q228 each bind ATP. Position 447 (H447) interacts with L-aspartate. ATP is bound at residue E477. R484 is an L-aspartate binding site. ATP is bound at residue 529 to 532 (GFDR).

It belongs to the class-II aminoacyl-tRNA synthetase family. Type 1 subfamily. Homodimer.

The protein resides in the cytoplasm. It carries out the reaction tRNA(Asx) + L-aspartate + ATP = L-aspartyl-tRNA(Asx) + AMP + diphosphate. Functionally, aspartyl-tRNA synthetase with relaxed tRNA specificity since it is able to aspartylate not only its cognate tRNA(Asp) but also tRNA(Asn). Reaction proceeds in two steps: L-aspartate is first activated by ATP to form Asp-AMP and then transferred to the acceptor end of tRNA(Asp/Asn). The polypeptide is Aspartate--tRNA(Asp/Asn) ligase (Campylobacter hominis (strain ATCC BAA-381 / DSM 21671 / CCUG 45161 / LMG 19568 / NCTC 13146 / CH001A)).